The chain runs to 327 residues: UDP-N-acetylenolpyruvoylglucosamine reductase (327 aa).

Residues 42 to 223 (RTGGLAELFY…RAAMDEVALH (182 aa)) form the FAD-binding PCMH-type domain. Arginine 188 is an active-site residue. The Proton donor role is filled by serine 237. Glutamate 307 is an active-site residue.

It belongs to the MurB family. FAD serves as cofactor.

The protein resides in the cytoplasm. The enzyme catalyses UDP-N-acetyl-alpha-D-muramate + NADP(+) = UDP-N-acetyl-3-O-(1-carboxyvinyl)-alpha-D-glucosamine + NADPH + H(+). Its pathway is cell wall biogenesis; peptidoglycan biosynthesis. Its function is as follows. Cell wall formation. This Bartonella tribocorum (strain CIP 105476 / IBS 506) protein is UDP-N-acetylenolpyruvoylglucosamine reductase.